We begin with the raw amino-acid sequence, 658 residues long: MIPELPHAQLDWDDQGRPRSRVFDDVYFSSESGLDETRHVFIEQNRLGQRFAALADGERFVIGETGFGTGLNFLCAWQLFQQQAPTGARLHFVSVEKYPLSPADLQRALALWPELASFSAPLLEQYVAVHGGFQRIVLEGGRVILTLLIGDALEQLPQLDAQVDAWFLDGFAPAKNPDMWTAELFAELARLAAPGSTISTFTSTGWVRRLLNSAGFKMKRTPGIGHKWEVLRGEFLGWPEDAPAPARARPWFARPALGEKTALVIGGGLAGCASAASLAARGWQVQLLERHAELAREASGNPQGVLYLKLSAHGTALSQMILSGFGYTRRQLEHLQRGQDWDGCGVLQLAFNAKEAERQAQLAAAFPADLLHLLDQPQAQARAGIGLEHGGLFYPEGGWVHPPALCQWQASHPRIQVLAHREVLELRRVDEQWQAWDGDRMLASAAVVILAGAAEIKRFPASADLPLKRIRGQITRLPQTAQSQSLATVVCAEGYVAPARLGEHTLGASFDFKSQDLTPTSAEHAGNLEMLREISSDLLQRLGAEQLPLDSLQGRAAFRCTSPDYLPIVGPLADPLAFAETYAALGKDARQVPDLPCPWLDGLYINSGHGSRGLITAPLSGELLAAWLENEPLPLPRSVAEACHPNRFALRRLIRGKA.

The tract at residues 1–236 (MIPELPHAQL…KWEVLRGEFL (236 aa)) is tRNA (mnm(5)s(2)U34)-methyltransferase. An FAD-dependent cmnm(5)s(2)U34 oxidoreductase region spans residues 265–658 (IGGGLAGCAS…ALRRLIRGKA (394 aa)).

This sequence in the N-terminal section; belongs to the methyltransferase superfamily. tRNA (mnm(5)s(2)U34)-methyltransferase family. In the C-terminal section; belongs to the DAO family. Requires FAD as cofactor.

It localises to the cytoplasm. It carries out the reaction 5-aminomethyl-2-thiouridine(34) in tRNA + S-adenosyl-L-methionine = 5-methylaminomethyl-2-thiouridine(34) in tRNA + S-adenosyl-L-homocysteine + H(+). Functionally, catalyzes the last two steps in the biosynthesis of 5-methylaminomethyl-2-thiouridine (mnm(5)s(2)U) at the wobble position (U34) in tRNA. Catalyzes the FAD-dependent demodification of cmnm(5)s(2)U34 to nm(5)s(2)U34, followed by the transfer of a methyl group from S-adenosyl-L-methionine to nm(5)s(2)U34, to form mnm(5)s(2)U34. In Pseudomonas fluorescens (strain ATCC BAA-477 / NRRL B-23932 / Pf-5), this protein is tRNA 5-methylaminomethyl-2-thiouridine biosynthesis bifunctional protein MnmC.